The sequence spans 497 residues: tRNA-2-methylthio-N(6)-dimethylallyladenosine synthase (497 aa).

In terms of domain architecture, MTTase N-terminal spans 4–120 (RSYEVRTFGC…LPVLLERARH (117 aa)). [4Fe-4S] cluster-binding residues include cysteine 13, cysteine 49, cysteine 83, cysteine 157, cysteine 161, and cysteine 164. Positions 143 to 374 (RASHHSAWVS…ALQDEVSWAQ (232 aa)) constitute a Radical SAM core domain. Residues 376–445 (RELVGRRVEL…PHHLTADGPL (70 aa)) enclose the TRAM domain.

This sequence belongs to the methylthiotransferase family. MiaB subfamily. As to quaternary structure, monomer. Requires [4Fe-4S] cluster as cofactor.

It is found in the cytoplasm. The enzyme catalyses N(6)-dimethylallyladenosine(37) in tRNA + (sulfur carrier)-SH + AH2 + 2 S-adenosyl-L-methionine = 2-methylsulfanyl-N(6)-dimethylallyladenosine(37) in tRNA + (sulfur carrier)-H + 5'-deoxyadenosine + L-methionine + A + S-adenosyl-L-homocysteine + 2 H(+). Functionally, catalyzes the methylthiolation of N6-(dimethylallyl)adenosine (i(6)A), leading to the formation of 2-methylthio-N6-(dimethylallyl)adenosine (ms(2)i(6)A) at position 37 in tRNAs that read codons beginning with uridine. This chain is tRNA-2-methylthio-N(6)-dimethylallyladenosine synthase, found in Frankia alni (strain DSM 45986 / CECT 9034 / ACN14a).